The chain runs to 662 residues: 72 kDa type IV collagenase (662 aa).

The signal sequence occupies residues 1–29; it reads MEARVAWGALAGPLRVLCVLCCLLGRAIA. Residues 30-109 constitute a propeptide, activation peptide; that stretch reads APSPIIKFPG…PRCGNPDVAN (80 aa). The short motif at 100 to 107 is the Cysteine switch element; the sequence is PRCGNPDV. C102 is a binding site for Zn(2+). The collagenase-like 1 stretch occupies residues 110 to 221; it reads YNFFPRKPKW…LWTLGEGQVV (112 aa). Residues D134 and D168 each contribute to the Ca(2+) site. Zn(2+) contacts are provided by H178 and D180. Residues D185 and G186 each coordinate Ca(2+). H193 contributes to the Zn(2+) binding site. Ca(2+) contacts are provided by G200, G202, and D204. H206 provides a ligand contact to Zn(2+). Positions 208, 209, and 211 each coordinate Ca(2+). Residues 222–396 are collagen-binding; it reads RVKYGNADGE…WGFCPDQGYS (175 aa). Fibronectin type-II domains are found at residues 228-276, 286-334, and 344-392; these read ADGE…FCPH, ADGQ…FCPE, and SEGA…FCPD. 6 disulfide bridges follow: C233/C259, C247/C274, C291/C317, C305/C332, C349/C375, and C363/C390. The segment at 397–467 is collagenase-like 2; it reads LFLVAAHEFG…GPTPTLGPVT (71 aa). A Zn(2+)-binding site is contributed by H403. E404 is an active-site residue. 2 residues coordinate Zn(2+): H407 and H413. The interval 414–662 is required for inhibitor TIMP2 binding; the sequence is SQDPGALMAP…GSIKSDWLGC (249 aa). The segment at 446–465 is disordered; the sequence is GPSPDADTDTGTGPTPTLGP. A disulfide bond links C471 and C662. Hemopexin repeat units lie at residues 474-518, 519-565, 567-615, and 616-662; these read DIVF…WPEL, PEKI…GLPP, VQQV…WNAI, and PDNL…WLGC. D478, D523, and D571 together coordinate Ca(2+). The N-linked (GlcNAc...) asparagine glycan is linked to N575. D620 provides a ligand contact to Ca(2+). A glycan (N-linked (GlcNAc...) asparagine) is linked at N644.

This sequence belongs to the peptidase M10A family. Interacts (via the C-terminal hemopexin-like domains-containing region) with the integrin alpha-V/beta-3; the interaction promotes vascular invasion in angiogenic vessels and melamoma cells. Interacts (via the C-terminal PEX domain) with TIMP2 (via the C-terminal); the interaction inhibits the degradation activity. Interacts with GSK3B. Requires Ca(2+) as cofactor. Zn(2+) serves as cofactor. In terms of processing, phosphorylation on multiple sites modulates enzymatic activity. Phosphorylated by PKC in vitro. The propeptide is processed by MMP14 (MT-MMP1) and MMP16 (MT-MMP3). Autocatalytic cleavage in the C-terminal produces the anti-angiogenic peptide, PEX. This processing appears to be facilitated by binding integrinv/beta3.

The protein resides in the secreted. Its subcellular location is the extracellular space. The protein localises to the extracellular matrix. It localises to the membrane. It is found in the nucleus. The protein resides in the cytoplasm. Its subcellular location is the mitochondrion. It catalyses the reaction Cleavage of gelatin type I and collagen types IV, V, VII, X. Cleaves the collagen-like sequence Pro-Gln-Gly-|-Ile-Ala-Gly-Gln.. Its function is as follows. Ubiquitinous metalloproteinase that is involved in diverse functions such as remodeling of the vasculature, angiogenesis, tissue repair, tumor invasion, inflammation, and atherosclerotic plaque rupture. As well as degrading extracellular matrix proteins, can also act on several nonmatrix proteins such as big endothelial 1 and beta-type CGRP promoting vasoconstriction. Also cleaves KISS at a Gly-|-Leu bond. Appears to have a role in myocardial cell death pathways. Contributes to myocardial oxidative stress by regulating the activity of GSK3beta. Cleaves GSK3beta in vitro. Involved in the formation of the fibrovascular tissues. Functionally, PEX, the C-terminal non-catalytic fragment of MMP2, possesses anti-angiogenic and anti-tumor properties and inhibits cell migration and cell adhesion to FGF2 and vitronectin. Ligand for integrin alpha-v/beta-3 on the surface of blood vessels. In terms of biological role, mediates the proteolysis of CHUK/IKKA and initiates a primary innate immune response by inducing mitochondrial-nuclear stress signaling with activation of the pro-inflammatory NF-kappaB, NFAT and IRF transcriptional pathways. This is 72 kDa type IV collagenase (Mmp2) from Mus musculus (Mouse).